Here is a 291-residue protein sequence, read N- to C-terminus: Protease HtpX (291 aa).

The next 2 membrane-spanning stretches (helical) occupy residues 4 to 24 (IALF…VLNI) and 36 to 56 (LSGL…VSLL). A Zn(2+)-binding site is contributed by H143. The active site involves E144. H147 contacts Zn(2+). 2 helical membrane-spanning segments follow: residues 151–171 (GDMI…IFLS) and 199–219 (FIVS…LTMW). Zn(2+) is bound at residue E225.

Belongs to the peptidase M48B family. Zn(2+) serves as cofactor.

The protein resides in the cell inner membrane. The sequence is that of Protease HtpX from Aliivibrio salmonicida (strain LFI1238) (Vibrio salmonicida (strain LFI1238)).